A 256-amino-acid polypeptide reads, in one-letter code: Ubiquinone/menaquinone biosynthesis C-methyltransferase UbiE (256 aa).

S-adenosyl-L-methionine-binding residues include Thr78 and Asp99.

It belongs to the class I-like SAM-binding methyltransferase superfamily. MenG/UbiE family.

The catalysed reaction is a 2-demethylmenaquinol + S-adenosyl-L-methionine = a menaquinol + S-adenosyl-L-homocysteine + H(+). It carries out the reaction a 2-methoxy-6-(all-trans-polyprenyl)benzene-1,4-diol + S-adenosyl-L-methionine = a 5-methoxy-2-methyl-3-(all-trans-polyprenyl)benzene-1,4-diol + S-adenosyl-L-homocysteine + H(+). It participates in quinol/quinone metabolism; menaquinone biosynthesis; menaquinol from 1,4-dihydroxy-2-naphthoate: step 2/2. Its pathway is cofactor biosynthesis; ubiquinone biosynthesis. Methyltransferase required for the conversion of demethylmenaquinol (DMKH2) to menaquinol (MKH2) and the conversion of 2-polyprenyl-6-methoxy-1,4-benzoquinol (DDMQH2) to 2-polyprenyl-3-methyl-6-methoxy-1,4-benzoquinol (DMQH2). The chain is Ubiquinone/menaquinone biosynthesis C-methyltransferase UbiE from Geobacter sulfurreducens (strain ATCC 51573 / DSM 12127 / PCA).